A 314-amino-acid chain; its full sequence is MAVAAPSPAAAAEPGPAARPRSTRGQVRLPGGEFAMGDAFGEGYPADGETPVHTVRLRPFHIDETAVTNARFAAFVKATGHVTDAERFGSSAVFHLVVAAPDADVLGSAAGAPWWINVRGAHWRRPEGARSDITGRPNHPVVHVSWNDATAYARWAGKRLPTEAEWEYAARGGLAGRRYAWGDELTPGGRWRCNIWQGRFPHVNTAEDGHLSTAPVKSYRPNGHGLWNTAGNVWEWCSDWFSPTYYAESPTVDPHGPGTGAARVLRGGSYLCHDSYCNRYRVAARSSNTPDSSSGNLGFRCANDADLTSGSAAE.

The span at 1 to 20 shows a compositional bias: low complexity; the sequence is MAVAAPSPAAAAEPGPAARP. The segment at 1 to 31 is disordered; sequence MAVAAPSPAAAAEPGPAARPRSTRGQVRLPG. Ca(2+) is bound by residues asparagine 194, isoleucine 195, aspartate 208, and histidine 210. Cu(2+) is bound by residues cysteine 272 and cysteine 277.

Belongs to the sulfatase-modifying factor family. Requires Cu(2+) as cofactor.

The enzyme catalyses L-cysteinyl-[sulfatase] + 2 a thiol + O2 = an organic disulfide + 3-oxo-L-alanyl-[sulfatase] + hydrogen sulfide + H2O + H(+). Its pathway is protein modification; sulfatase oxidation. Functionally, oxidase that catalyzes the conversion of cysteine to 3-oxoalanine on target proteins. 3-oxoalanine modification, which is also named formylglycine (fGly), occurs in the maturation of arylsulfatases and some alkaline phosphatases that use the hydrated form of 3-oxoalanine as a catalytic nucleophile. This is Formylglycine-generating enzyme from Streptomyces coelicolor (strain ATCC BAA-471 / A3(2) / M145).